A 2809-amino-acid polypeptide reads, in one-letter code: Fibrillin-3 (2809 aa).

An N-terminal signal peptide occupies residues Met1–Gly31. Residues Arg32–Arg48 constitute a propeptide that is removed on maturation. One can recognise an EGF-like 1 domain in the interval Gly147–Glu179. Cystine bridges form between Cys151–Cys161, Cys155–Cys167, and Cys169–Cys178. A TB 1 domain is found at Gly185–Ile237. In terms of domain architecture, EGF-like 2; calcium-binding spans Asp247–Glu288. Disulfide bonds link Cys251–Cys263, Cys258–Cys272, and Cys274–Cys287. Residues Gly293–Cys346 form the TB 2 domain. N-linked (GlcNAc...) asparagine glycosylation is present at Asn406. Residues Thr408 to Ile448 form the EGF-like 3 domain. 15 disulfides stabilise this stretch: Cys412–Cys424, Cys419–Cys433, Cys435–Cys447, Cys453–Cys463, Cys458–Cys472, Cys474–Cys487, Cys493–Cys505, Cys500–Cys514, Cys516–Cys529, Cys535–Cys546, Cys541–Cys555, Cys557–Cys570, Cys576–Cys587, Cys582–Cys596, and Cys598–Cys611. An EGF-like 4; calcium-binding domain is found at Asp449–Val488. The EGF-like 5; calcium-binding domain maps to Asp489–Val530. The EGF-like 6; calcium-binding domain occupies Asp531–Met571. The EGF-like 7; calcium-binding domain maps to Asp572 to Val612. The region spanning Ser618 to Cys670 is the TB 3 domain. Residues Asp682 to Thr723 enclose the EGF-like 8; calcium-binding domain. 9 disulfides stabilise this stretch: Cys686–Cys698, Cys693–Cys707, Cys709–Cys722, Cys728–Cys740, Cys735–Cys749, Cys751–Cys764, Cys770–Cys780, Cys775–Cys789, and Cys791–Cys804. In terms of domain architecture, EGF-like 9; calcium-binding spans Asp724–Lys765. Positions Asp766–Leu805 constitute an EGF-like 10; calcium-binding domain. The TB 4 domain maps to Gly810–Arg861. In terms of domain architecture, EGF-like 11; calcium-binding spans Asp869–Val910. 3 disulfides stabilise this stretch: Cys873-Cys885, Cys880-Cys894, and Cys896-Cys909. The 52-residue stretch at Glu915–Cys966 folds into the TB 5 domain. The EGF-like 12; calcium-binding domain maps to Asp986–Thr1027. Intrachain disulfides connect Cys990–Cys1002, Cys997–Cys1011, Cys1013–Cys1026, Cys1032–Cys1044, Cys1039–Cys1053, Cys1055–Cys1069, Cys1075–Cys1087, Cys1082–Cys1096, Cys1098–Cys1111, Cys1117–Cys1129, Cys1124–Cys1138, Cys1140–Cys1153, Cys1159–Cys1170, Cys1166–Cys1179, Cys1181–Cys1194, Cys1200–Cys1212, Cys1207–Cys1221, Cys1223–Cys1236, Cys1242–Cys1254, Cys1249–Cys1263, Cys1265–Cys1278, Cys1284–Cys1297, Cys1291–Cys1306, Cys1308–Cys1319, Cys1325–Cys1338, Cys1332–Cys1347, Cys1349–Cys1360, Cys1366–Cys1378, Cys1373–Cys1387, Cys1389–Cys1402, Cys1408–Cys1419, Cys1414–Cys1428, Cys1430–Cys1443, Cys1449–Cys1460, Cys1455–Cys1469, and Cys1471–Cys1484. An N-linked (GlcNAc...) asparagine glycan is attached at Asn1025. An EGF-like 13; calcium-binding domain is found at Asp1028–Met1070. The EGF-like 14; calcium-binding domain maps to Asp1071–Glu1112. The 42-residue stretch at Asp1113 to Val1154 folds into the EGF-like 15; calcium-binding domain. Residues Asp1155–Ala1195 form the EGF-like 16; calcium-binding domain. Positions Asp1196–Val1237 constitute an EGF-like 17 domain. The 42-residue stretch at Asp1238–Ser1279 folds into the EGF-like 18; calcium-binding domain. An EGF-like 19; calcium-binding domain is found at Asp1280–His1320. Residues Asp1321–Glu1361 enclose the EGF-like 20; calcium-binding domain. One can recognise an EGF-like 21; calcium-binding domain in the interval Asp1362–Gln1403. Positions Asp1404 to Thr1444 constitute an EGF-like 22; calcium-binding domain. N-linked (GlcNAc...) asparagine glycosylation is present at Asn1442. Positions Asp1445–Val1485 constitute an EGF-like 23; calcium-binding domain. A TB 6 domain is found at Gly1490–Cys1546. Asn1538 carries an N-linked (GlcNAc...) asparagine glycan. Residues Asp1563–Glu1604 enclose the EGF-like 24; calcium-binding domain. Cystine bridges form between Cys1567–Cys1579, Cys1574–Cys1588, Cys1590–Cys1603, Cys1609–Cys1621, Cys1616–Cys1630, and Cys1632–Cys1645. Residues Asp1605–Met1646 form the EGF-like 25; calcium-binding domain. N-linked (GlcNAc...) asparagine glycosylation occurs at Asn1627. Residues Ser1651 to Cys1703 form the TB 7 domain. N-linked (GlcNAc...) asparagine glycosylation is found at Asn1658 and Asn1668. An EGF-like 26; calcium-binding domain is found at Asp1721–Glu1762. Disulfide bonds link Cys1725–Cys1737, Cys1732–Cys1746, Cys1748–Cys1761, Cys1767–Cys1780, Cys1774–Cys1789, Cys1791–Cys1803, Cys1809–Cys1821, Cys1816–Cys1830, Cys1832–Cys1845, Cys1851–Cys1861, Cys1856–Cys1870, Cys1872–Cys1884, Cys1890–Cys1903, Cys1898–Cys1912, Cys1914–Cys1927, Cys1933–Cys1945, Cys1940–Cys1954, Cys1956–Cys1967, Cys1973–Cys1985, Cys1980–Cys1994, and Cys1996–Cys2009. The EGF-like 27; calcium-binding domain occupies Asp1763 to Val1804. In terms of domain architecture, EGF-like 28 spans Gly1805 to Met1846. In terms of domain architecture, EGF-like 29; calcium-binding spans Asp1847 to Val1885. Asn1858 is a glycosylation site (N-linked (GlcNAc...) asparagine). Residues Asp1886–Val1928 form the EGF-like 30; calcium-binding domain. Residues Asp1929–Ile1968 form the EGF-like 31; calcium-binding domain. The 42-residue stretch at Asp1969 to Phe2010 folds into the EGF-like 32; calcium-binding domain. The region spanning Ser2015–Cys2068 is the TB 8 domain. N-linked (GlcNAc...) asparagine glycosylation occurs at Asn2033. Residues Asp2084–Val2125 enclose the EGF-like 33; calcium-binding domain. 15 disulfides stabilise this stretch: Cys2088/Cys2100, Cys2095/Cys2109, Cys2111/Cys2124, Cys2130/Cys2141, Cys2136/Cys2150, Cys2152/Cys2164, Cys2170/Cys2181, Cys2177/Cys2190, Cys2192/Cys2205, Cys2211/Cys2225, Cys2218/Cys2234, Cys2236/Cys2250, Cys2256/Cys2268, Cys2263/Cys2277, and Cys2279/Cys2292. The 40-residue stretch at Asp2126–Glu2165 folds into the EGF-like 34; calcium-binding domain. The region spanning Asp2166–Arg2206 is the EGF-like 35; calcium-binding domain. The EGF-like 36; calcium-binding domain occupies Asp2207–Thr2251. The EGF-like 37; calcium-binding domain maps to Asp2252 to His2293. A TB 9 domain is found at Gly2298–Cys2351. The EGF-like 38; calcium-binding domain maps to Asp2363 to Leu2404. 21 cysteine pairs are disulfide-bonded: Cys2367–Cys2379, Cys2374–Cys2388, Cys2390–Cys2403, Cys2409–Cys2420, Cys2416–Cys2429, Cys2431–Cys2444, Cys2450–Cys2461, Cys2457–Cys2470, Cys2472–Cys2483, Cys2489–Cys2502, Cys2496–Cys2511, Cys2513–Cys2526, Cys2532–Cys2542, Cys2538–Cys2551, Cys2553–Cys2566, Cys2572–Cys2584, Cys2579–Cys2593, Cys2595–Cys2608, Cys2614–Cys2625, Cys2621–Cys2634, and Cys2636–Cys2648. The region spanning Asp2405–Lys2445 is the EGF-like 39; calcium-binding domain. The 39-residue stretch at Asp2446 to Phe2484 folds into the EGF-like 40; calcium-binding domain. One can recognise an EGF-like 41; calcium-binding domain in the interval Asp2485 to Glu2527. The EGF-like 42; calcium-binding domain occupies Asp2528–Val2567. The 42-residue stretch at Asp2568–Gln2609 folds into the EGF-like 43; calcium-binding domain. The EGF-like 44; calcium-binding domain occupies Glu2610–Val2649. Asn2713 carries an N-linked (GlcNAc...) asparagine glycan.

Belongs to the fibrillin family. Post-translationally, probably forms intermolecular disulfide bonds either with other FBN3 molecules or with other components of the microfibrils. Predominantly expressed in connective tissues such as skeletal muscle, tendon, skin, perichondrium and periosteum. Highly expressed in fetal lung, brain, kidney. Expressed at low level in prostate, testis, mammary gland, uterus, ovary, placenta, bladder, adrenal gland, thyroid, fetal thymus, fetal liver, liver, fetal heart and heart.

The protein resides in the secreted. Its subcellular location is the extracellular space. It is found in the extracellular matrix. Functionally, fibrillins are structural components of 10-12 nm extracellular calcium-binding microfibrils, which occur either in association with elastin or in elastin-free bundles. Fibrillin-containing microfibrils provide long-term force bearing structural support. This is Fibrillin-3 (FBN3) from Homo sapiens (Human).